The chain runs to 230 residues: Orotidine 5'-phosphate decarboxylase (230 aa).

Substrate is bound by residues Asp11, Lys34, 61 to 70 (DLKLHDIPNT), Thr117, Arg179, Gln188, Gly208, and Arg209. Lys63 serves as the catalytic Proton donor.

It belongs to the OMP decarboxylase family. Type 1 subfamily. Homodimer.

The enzyme catalyses orotidine 5'-phosphate + H(+) = UMP + CO2. Its pathway is pyrimidine metabolism; UMP biosynthesis via de novo pathway; UMP from orotate: step 2/2. Its function is as follows. Catalyzes the decarboxylation of orotidine 5'-monophosphate (OMP) to uridine 5'-monophosphate (UMP). The chain is Orotidine 5'-phosphate decarboxylase from Streptococcus gordonii (strain Challis / ATCC 35105 / BCRC 15272 / CH1 / DL1 / V288).